The primary structure comprises 273 residues: Arginine and glutamate-rich protein 1 (273 aa).

Composition is skewed to basic residues over residues 1 to 29 and 37 to 58; these read MGRS…RSRS and VRKR…RSRS. The tract at residues 1 to 74 is necessary and sufficient for RNA binding; that stretch reads MGRSRSRSSS…VSRRERDRER (74 aa). A disordered region spans residues 1–113; the sequence is MGRSRSRSSS…EEKKAEFERQ (113 aa). Phosphoserine occurs at positions 58 and 60. Position 61 is a phosphothreonine (T61). 2 stretches are compositionally biased toward basic and acidic residues: residues 66 to 84 and 93 to 113; these read SRRE…RIDI and SSLD…FERQ. Residues 75–273 form a necessary and sufficient for transcriptional regulation region; it reads ASSPPDRIDI…KLSFSLKTQD (199 aa). 2 positions are modified to phosphoserine: S76 and S77. An LXXLL motif 1; degenerate motif is present at residues 172 to 176; it reads LLEEL. The LXXLL motif 2; degenerate motif lies at 201–205; sequence LERIL. Residues 238 to 253 are compositionally biased toward basic and acidic residues; sequence MKLEQERQRQQKEEQK. Positions 238–273 are disordered; sequence MKLEQERQRQQKEEQKIILGKGKSRPKLSFSLKTQD. S266 carries the phosphoserine modification.

It belongs to the ARGLU1 family. In terms of assembly, interacts with MED1; the interaction is direct. Interacts with PUF60, U2AF2 and JMJD6; may interact with other proteins involved in RNA processing and splicing.

The protein localises to the nucleus. The protein resides in the nucleus speckle. It is found in the chromosome. Dual function regulator of gene expression; regulator of transcription and modulator of alternative splicing. General coactivator of nuclear receptor-induced gene expression, including genes activated by the glucocorticoid receptor NR3C1. Binds to a subset of pre-mRNAs and to components of the spliceosome machinery to directly modulate basal alternative splicing; involved in simple and complex cassette exon splicing events. Binds its own pre-mRNA and regulates its alternative splicing and degradation; one of the alternatively spliced products is a stable intronic sequence RNA (sisRNA) that binds the protein to regulate its ability to affect splicing. Binding of the sisRNA stimulates phase separation and localization to nuclear speckles, which may contribute to activation of nuclear receptor-induced gene expression. May also indirectly modulate alternative splicing. Regulates transcription of genes involved in heart development, neuronal cell function, protein localization and chromatin localization. Regulates splicing of genes involved in neurogenesis and chromatin organization. Essential for central nervous system development. Required for the estrogen-dependent expression of ESR1 target genes. Can act in cooperation with MED1. The sequence is that of Arginine and glutamate-rich protein 1 (ARGLU1) from Bos taurus (Bovine).